The sequence spans 152 residues: Proline-rich acidic protein 1 (152 aa).

A signal peptide spans 1–20; the sequence is MKRFLLATCLVAVLLWEAGA.

As to quaternary structure, interacts with MTTP. Interacts with MAD1L1. In terms of tissue distribution, highly expressed in the small intestine where it shows a proximal-distal graded expression.

It localises to the secreted. It is found in the endoplasmic reticulum. Its function is as follows. Lipid-binding protein which promotes lipid absorption by facilitating MTTP-mediated lipid transfer (mainly triglycerides and phospholipids) and MTTP-mediated apoB lipoprotein assembly and secretion. Protects the gastrointestinal epithelium from irradiation-induced apoptosis. May play an important role in maintaining normal growth homeostasis in epithelial cells. Involved in p53/TP53-dependent cell survival after DNA damage. The chain is Proline-rich acidic protein 1 (Prap1) from Rattus norvegicus (Rat).